A 304-amino-acid chain; its full sequence is D-alanine--D-alanine ligase (304 aa).

Residues 103–299 (KLIWQALGLP…FADLCIEILK (197 aa)) enclose the ATP-grasp domain. An ATP-binding site is contributed by 129 to 184 (EEKLGLPMFVKPAAEGSSVGVVKVKEKGRLKSVYEELKHLQGEIIAERFIGGGEYS). Mg(2+)-binding residues include Asp253, Glu266, and Asn268.

It belongs to the D-alanine--D-alanine ligase family. Requires Mg(2+) as cofactor. It depends on Mn(2+) as a cofactor.

It is found in the cytoplasm. The enzyme catalyses 2 D-alanine + ATP = D-alanyl-D-alanine + ADP + phosphate + H(+). It participates in cell wall biogenesis; peptidoglycan biosynthesis. In terms of biological role, cell wall formation. The polypeptide is D-alanine--D-alanine ligase (Neisseria gonorrhoeae (strain ATCC 700825 / FA 1090)).